We begin with the raw amino-acid sequence, 211 residues long: Large ribosomal subunit protein bL25 (211 aa).

Belongs to the bacterial ribosomal protein bL25 family. CTC subfamily. In terms of assembly, part of the 50S ribosomal subunit; part of the 5S rRNA/L5/L18/L25 subcomplex. Contacts the 5S rRNA. Binds to the 5S rRNA independently of L5 and L18.

Its function is as follows. This is one of the proteins that binds to the 5S RNA in the ribosome where it forms part of the central protuberance. The polypeptide is Large ribosomal subunit protein bL25 (Xanthomonas axonopodis pv. citri (strain 306)).